A 691-amino-acid polypeptide reads, in one-letter code: Amino-acid acetyltransferase, mitochondrial (691 aa).

The span at 1–27 (MSSTSLAWPRTAKSSLLQSADFSSTSK) shows a compositional bias: polar residues. Disordered regions lie at residues 1 to 29 (MSSTSLAWPRTAKSSLLQSADFSSTSKGY) and 65 to 95 (RLKAQHSPKPQVKEPEKESKDDAPQPLPSGV). A compositionally biased stretch (basic and acidic residues) spans 75 to 87 (QVKEPEKESKDDA). The region spanning 512–681 (NRPRMSLDDP…YEAVCRSIQP (170 aa)) is the N-acetyltransferase domain.

The protein belongs to the acetyltransferase family.

Its subcellular location is the mitochondrion. It catalyses the reaction L-glutamate + acetyl-CoA = N-acetyl-L-glutamate + CoA + H(+). Its pathway is amino-acid biosynthesis; L-arginine biosynthesis; N(2)-acetyl-L-ornithine from L-glutamate: step 1/4. N-acetylglutamate synthase involved in arginine biosynthesis. In Aspergillus terreus (strain NIH 2624 / FGSC A1156), this protein is Amino-acid acetyltransferase, mitochondrial (arg2).